The primary structure comprises 609 residues: Autophagy-related protein 22-1 (609 aa).

4 helical membrane passes run 35–55, 117–137, 151–171, and 176–196; these read YGWA…PITL, TASF…ILII, LLLM…LGVV, and MVGA…FVLL. Residues 214–231 are compositionally biased toward basic and acidic residues; that stretch reads AREPRPALDDSRAQEGHS. The segment at 214–240 is disordered; sequence AREPRPALDDSRAQEGHSDTTNGIEHG. The N-linked (GlcNAc...) asparagine glycan is linked to Asn-244. The chain crosses the membrane as a helical span at residues 287 to 307; the sequence is IGIGYIGAIILQIVCILVVIA. The N-linked (GlcNAc...) asparagine glycan is linked to Asn-309. A run of 3 helical transmembrane segments spans residues 317–337, 381–401, and 415–435; these read LVLF…ALWL, ILLF…VSGT, and AALG…AFSW. N-linked (GlcNAc...) asparagine glycosylation occurs at Asn-443. The next 4 membrane-spanning stretches (helical) occupy residues 450–470, 477–497, 522–542, and 552–572; these read IIAC…GFIP, FLGL…GLVM, ALYA…VGII, and AFVF…LVDV.

Belongs to the ATG22 family.

The protein resides in the vacuole membrane. Vacuolar effluxer which mediate the efflux of amino acids resulting from autophagic degradation. The release of autophagic amino acids allows the maintenance of protein synthesis and viability during nitrogen starvation. This is Autophagy-related protein 22-1 (atg22-1) from Aspergillus fumigatus (strain ATCC MYA-4609 / CBS 101355 / FGSC A1100 / Af293) (Neosartorya fumigata).